The following is a 1124-amino-acid chain: EGF and laminin G domain-containing protein (1124 aa).

Topologically, residues 1 to 1055 (RTFVKKYSAS…KLQAEDDDKT (1055 aa)) are extracellular. Laminin G-like domains are found at residues 8 to 203 (SASR…NQKC) and 210 to 369 (PFTF…WSGC). Cystine bridges form between C167/C203, C342/C369, C375/C386, C380/C395, C397/C412, C761/C788, C792/C803, C797/C812, and C814/C824. The EGF-like 1 domain occupies 371–413 (ITDFCIFSPCLHGGECTQTGKTFSCGCSGTGYDKGPNSLSVCQ). A Laminin G-like 3 domain is found at 621 to 788 (NTATFVNEDG…GEAVFVKSGC (168 aa)). The 37-residue stretch at 789-825 (GAACENNSCKNHAKCLDNYNVYFCDCSKTPYYGYFCH) folds into the EGF-like 2 domain. Residues 1011 to 1047 (RATCGPEPKVPEIPTPRPVGQRADVSTPQGITTNPKL) are disordered. Residues 1034–1046 (DVSTPQGITTNPK) show a composition bias toward polar residues. A helical transmembrane segment spans residues 1056–1076 (AIIVVVVLILVLLLVVLILVI). Residues 1077–1124 (YWYWARHKGEYHTHEDDEELKATDPYIEPAAPRKLKGEEPEKKKEWYI) lie on the Cytoplasmic side of the membrane. A disordered region spans residues 1090-1124 (HEDDEELKATDPYIEPAAPRKLKGEEPEKKKEWYI). Basic and acidic residues predominate over residues 1111–1124 (LKGEEPEKKKEWYI).

In terms of tissue distribution, component of the acid-insoluble organic matrix of the aragonitic skeleton (at protein level).

The protein localises to the membrane. In Acropora millepora (Staghorn coral), this protein is EGF and laminin G domain-containing protein.